The chain runs to 272 residues: Shikimate dehydrogenase (NADP(+)) (272 aa).

Shikimate is bound by residues 14 to 16 and Thr61; that span reads SKS. Lys65 functions as the Proton acceptor in the catalytic mechanism. Glu77 contacts NADP(+). Shikimate is bound by residues Asn86 and Asp102. NADP(+) contacts are provided by residues 126 to 130, 149 to 154, and Met213; these read GAGGA and NRTVSR. Tyr215 serves as a coordination point for shikimate. Gly237 contacts NADP(+).

This sequence belongs to the shikimate dehydrogenase family. As to quaternary structure, homodimer.

It catalyses the reaction shikimate + NADP(+) = 3-dehydroshikimate + NADPH + H(+). Its pathway is metabolic intermediate biosynthesis; chorismate biosynthesis; chorismate from D-erythrose 4-phosphate and phosphoenolpyruvate: step 4/7. In terms of biological role, involved in the biosynthesis of the chorismate, which leads to the biosynthesis of aromatic amino acids. Catalyzes the reversible NADPH linked reduction of 3-dehydroshikimate (DHSA) to yield shikimate (SA). In Shigella flexneri serotype 5b (strain 8401), this protein is Shikimate dehydrogenase (NADP(+)).